A 72-amino-acid polypeptide reads, in one-letter code: Translation initiation factor IF-1 (72 aa).

Positions 1–72 (MAREDLIEVE…SRGRITYRKK (72 aa)) constitute an S1-like domain.

Belongs to the IF-1 family. As to quaternary structure, component of the 30S ribosomal translation pre-initiation complex which assembles on the 30S ribosome in the order IF-2 and IF-3, IF-1 and N-formylmethionyl-tRNA(fMet); mRNA recruitment can occur at any time during PIC assembly.

It is found in the cytoplasm. Its function is as follows. One of the essential components for the initiation of protein synthesis. Stabilizes the binding of IF-2 and IF-3 on the 30S subunit to which N-formylmethionyl-tRNA(fMet) subsequently binds. Helps modulate mRNA selection, yielding the 30S pre-initiation complex (PIC). Upon addition of the 50S ribosomal subunit IF-1, IF-2 and IF-3 are released leaving the mature 70S translation initiation complex. The sequence is that of Translation initiation factor IF-1 from Acholeplasma laidlawii (strain PG-8A).